Reading from the N-terminus, the 1213-residue chain is DNA-directed RNA polymerase subunit beta' (1213 aa).

The Zn(2+) site is built by cysteine 60, cysteine 62, cysteine 75, and cysteine 78. Mg(2+) contacts are provided by aspartate 450, aspartate 452, and aspartate 454. Zn(2+) contacts are provided by cysteine 819, cysteine 893, cysteine 900, and cysteine 903.

The protein belongs to the RNA polymerase beta' chain family. In terms of assembly, the RNAP catalytic core consists of 2 alpha, 1 beta, 1 beta' and 1 omega subunit. When a sigma factor is associated with the core the holoenzyme is formed, which can initiate transcription. Mg(2+) is required as a cofactor. Zn(2+) serves as cofactor.

The catalysed reaction is RNA(n) + a ribonucleoside 5'-triphosphate = RNA(n+1) + diphosphate. DNA-dependent RNA polymerase catalyzes the transcription of DNA into RNA using the four ribonucleoside triphosphates as substrates. The sequence is that of DNA-directed RNA polymerase subunit beta' from Streptococcus pyogenes serotype M6 (strain ATCC BAA-946 / MGAS10394).